The chain runs to 385 residues: Carbamoyl phosphate synthase small chain (385 aa).

The tract at residues 1–185 (MSEPAILVLA…LGKGFIEQTQ (185 aa)) is CPSase. Residues serine 47, glycine 237, and glycine 239 each coordinate L-glutamine. Positions 189 to 376 (NVVAYDFGVK…INEMRKANLS (188 aa)) constitute a Glutamine amidotransferase type-1 domain. Cysteine 265 acts as the Nucleophile in catalysis. Leucine 266, glutamine 269, asparagine 307, glycine 309, and phenylalanine 310 together coordinate L-glutamine. Catalysis depends on residues histidine 349 and glutamate 351.

This sequence belongs to the CarA family. In terms of assembly, composed of two chains; the small (or glutamine) chain promotes the hydrolysis of glutamine to ammonia, which is used by the large (or ammonia) chain to synthesize carbamoyl phosphate. Tetramer of heterodimers (alpha,beta)4.

The enzyme catalyses hydrogencarbonate + L-glutamine + 2 ATP + H2O = carbamoyl phosphate + L-glutamate + 2 ADP + phosphate + 2 H(+). It carries out the reaction L-glutamine + H2O = L-glutamate + NH4(+). It functions in the pathway amino-acid biosynthesis; L-arginine biosynthesis; carbamoyl phosphate from bicarbonate: step 1/1. The protein operates within pyrimidine metabolism; UMP biosynthesis via de novo pathway; (S)-dihydroorotate from bicarbonate: step 1/3. Small subunit of the glutamine-dependent carbamoyl phosphate synthetase (CPSase). CPSase catalyzes the formation of carbamoyl phosphate from the ammonia moiety of glutamine, carbonate, and phosphate donated by ATP, constituting the first step of 2 biosynthetic pathways, one leading to arginine and/or urea and the other to pyrimidine nucleotides. The small subunit (glutamine amidotransferase) binds and cleaves glutamine to supply the large subunit with the substrate ammonia. The chain is Carbamoyl phosphate synthase small chain from Pasteurella multocida (strain Pm70).